Reading from the N-terminus, the 708-residue chain is tRNA(Met) cytidine acetyltransferase TmcA (708 aa).

ATP-binding positions include Q189, 215 to 224, and R357; that span reads GRGKTSALGL. Residues 398–574 form the N-acetyltransferase domain; sequence PECVEQPERL…YSLLMVRGEH (177 aa). Residues 502–504 and 509–515 each bind acetyl-CoA; these read IAV and QRQGIGS.

This sequence belongs to the RNA cytidine acetyltransferase family. TmcA subfamily.

Its subcellular location is the cytoplasm. The catalysed reaction is cytidine(34) in elongator tRNA(Met) + acetyl-CoA + ATP + H2O = N(4)-acetylcytidine(34) in elongator tRNA(Met) + ADP + phosphate + CoA + H(+). Functionally, catalyzes the formation of N(4)-acetylcytidine (ac(4)C) at the wobble position of tRNA(Met), by using acetyl-CoA as an acetyl donor and ATP (or GTP). The protein is tRNA(Met) cytidine acetyltransferase TmcA of Vibrio cholerae serotype O1 (strain ATCC 39315 / El Tor Inaba N16961).